Consider the following 490-residue polypeptide: ATP synthase subunit beta, plastid (490 aa).

Position 170–177 (170–177 (GGAGVGKT)) interacts with ATP.

The protein belongs to the ATPase alpha/beta chains family. As to quaternary structure, F-type ATPases have 2 components, CF(1) - the catalytic core - and CF(0) - the membrane proton channel. CF(1) has five subunits: alpha(3), beta(3), gamma(1), delta(1), epsilon(1). CF(0) has four main subunits: a(1), b(1), b'(1) and c(9-12).

Its subcellular location is the plastid membrane. It catalyses the reaction ATP + H2O + 4 H(+)(in) = ADP + phosphate + 5 H(+)(out). Produces ATP from ADP in the presence of a proton gradient across the membrane. The catalytic sites are hosted primarily by the beta subunits. This is ATP synthase subunit beta, plastid (atpB) from Cuscuta japonica (Japanese dodder).